Consider the following 110-residue polypeptide: Large ribosomal subunit protein P2 (110 aa).

Residue serine 59 is modified to O-(pantetheine 4'-phosphoryl)serine; in acyl carrier protein form. Residues 62–110 form a disordered region; sequence LASVPSGGAAPAAAAGGAAAGGAAEEKAEDKPAEKDEESDDDMGFGLFD. Residues 63–84 are compositionally biased toward low complexity; sequence ASVPSGGAAPAAAAGGAAAGGA. The segment covering 85 to 95 has biased composition (basic and acidic residues); sequence AEEKAEDKPAE. The residue at position 100 (serine 100) is a Phosphoserine; in ribosomal stalk form.

Belongs to the eukaryotic ribosomal protein P1/P2 family. In terms of assembly, the phosphorylated form is part of the ribosomal stalk involved in the interaction of the elongation factors with the ribosome during protein synthesis. The phosphopantetheinylated form is part of the 10S triacylglycerol biosynthetic complex involved in de novo fatty acid biosynthesis. In terms of processing, 4'-phosphopantetheine is transferred from CoA to a specific serine by acpS. This modification is essential for activity because fatty acids are bound in thioester linkage to the sulfhydryl of the prosthetic group.

It localises to the cytoplasm. Probable bifunctional protein. The phosphorylated protein plays an important role in the elongation step of protein synthesis. The phosphopantetheinylated protein acts as an acyl carrier protein. The protein is Large ribosomal subunit protein P2 of Rhodotorula glutinis (Yeast).